The following is a 245-amino-acid chain: Mitochondrial import inner membrane translocase subunit Tim21 (245 aa).

Residues M1–S18 constitute a mitochondrion transit peptide. The disordered stretch occupies residues F64–S97. Over residues D70–S79 the composition is skewed to basic and acidic residues. A helical transmembrane segment spans residues T108–F128.

It belongs to the TIM21 family. Component of the TIM23 complex. Component of the MITRAC (mitochondrial translation regulation assembly intermediate of cytochrome c oxidase complex) complex, the core components of this complex being COA3/MITRAC12 and COX14. Interacts with COA3 and MT-CO1/COX1.

It is found in the mitochondrion membrane. Functionally, participates in the translocation of transit peptide-containing proteins across the mitochondrial inner membrane. Also required for assembly of mitochondrial respiratory chain complex I and complex IV as component of the MITRAC (mitochondrial translation regulation assembly intermediate of cytochrome c oxidase complex) complex. Probably shuttles between the presequence translocase and respiratory-chain assembly intermediates in a process that promotes incorporation of early nuclear-encoded subunits into these complexes. This chain is Mitochondrial import inner membrane translocase subunit Tim21 (Timm21), found in Rattus norvegicus (Rat).